The sequence spans 485 residues: E3 ubiquitin-protein ligase TRIM34B (485 aa).

Residues 15–58 (CPVCQELLTKALSLGCGHLVCQACLISNKNAVINPRGKSSCPVC) form an RING-type zinc finger. The segment at 91–127 (TKRDLCVHHGEKLLLFCKEDKKVICWVCERSQEHRGH) adopts a B box-type zinc-finger fold. Positions 96, 99, 118, and 124 each coordinate Zn(2+). The stretch at 136–170 (VRECQENLQKALTRLRKEQEKVETLEADIKEDRLS) forms a coiled coil. The B30.2/SPRY domain occupies 282–485 (LSGMLQKFRE…APMTLCPLNS (204 aa)).

This sequence belongs to the TRIM/RBCC family. As to quaternary structure, homotrimer. Interacts (via B-box and SPRY domain) with TRIM5.

Its subcellular location is the cytoplasm. The protein localises to the mitochondrion. It carries out the reaction S-ubiquitinyl-[E2 ubiquitin-conjugating enzyme]-L-cysteine + [acceptor protein]-L-lysine = [E2 ubiquitin-conjugating enzyme]-L-cysteine + N(6)-ubiquitinyl-[acceptor protein]-L-lysine.. It functions in the pathway protein modification; protein ubiquitination. In terms of biological role, functions as antiviral protein and contributes to the defense against retroviral infections. Acts as a capsid-specific restriction factor with the help of TRIM5 and prevents infection from non-host-adapted retroviruses. During influenza A virus infection, promotes programmed cell death by targeting ZBP1 for 'Lys-63'-linked polyubiquitination. In turn, promotes ZBP1 recruitment of RIPK3 to mediate virus-induced programmed necrosis. Negatively regulates the function of mitochondria by enhancing mitochondrial depolarization leading to cytochrome c release and mitochondria-dependent apoptosis. Also promotes the formation of multinucleated giant cells by means of cell fusion and phagocytosis in epithelial cells. Regulates intestinal inflammation by controlling the exocytosis of the major component of colonic mucus MUC2 from colonic goblet cells. This is E3 ubiquitin-protein ligase TRIM34B from Mus musculus (Mouse).